A 443-amino-acid chain; its full sequence is C4-dicarboxylate transport protein (443 aa).

A run of 10 helical transmembrane segments spans residues 10–30 (SLYF…HFYP), 46–66 (LIKM…IAGM), 78–98 (YALL…LIVV), 130–150 (SIVG…FANG), 152–172 (ILQV…LGAY), 199–219 (PLGA…GSLV), 224–244 (LMIC…GAIC), 291–311 (VVGL…SIYL), 332–352 (ITLL…TGSG), and 354–374 (IVLA…LALI). The tract at residues 415 to 443 (ELASGGRPITDTRETDDLGVAEGPAPSIK) is disordered.

It belongs to the dicarboxylate/amino acid:cation symporter (DAACS) (TC 2.A.23) family.

The protein resides in the cell inner membrane. Its function is as follows. Responsible for the transport of dicarboxylates such as succinate, fumarate, and malate from the periplasm across the membrane. The polypeptide is C4-dicarboxylate transport protein (Pseudomonas fluorescens (strain ATCC BAA-477 / NRRL B-23932 / Pf-5)).